Here is a 204-residue protein sequence, read N- to C-terminus: MDRAILLLSVVCLVVSSQPIADSQRLFSIAVSRVQHLHLLAQRLFSDFESSLQTEEQRQLNKIFLQDFCNSDYIISPIDKHETQRSSVLKLLSISYGLVESWEFPSRFLSGGSAPRTQISPKLSELKTGILLLIRANQDPAEIFSDPSAPQVPSYGNYYQSLGADESLRRTYELLACFKKDMHKVETYLTVAKCRLSPEANCTL.

The first 17 residues, 1-17 (MDRAILLLSVVCLVVSS), serve as a signal peptide directing secretion. Q18 is subject to Pyrrolidone carboxylic acid. H36 lines the Zn(2+) pocket. C69 and C177 form a disulfide bridge. Position 186 (E186) interacts with Zn(2+). C194 and C202 are joined by a disulfide.

This sequence belongs to the somatotropin/prolactin family.

It localises to the secreted. Functionally, growth hormone plays an important role in growth control and is involved in the regulation of several anabolic processes. Implicated as an osmoregulatory substance important for seawater adaptation. This is Somatotropin (gh) from Odontesthes argentinensis (Marine silverside).